Consider the following 448-residue polypeptide: Exodeoxyribonuclease 7 large subunit (448 aa).

This sequence belongs to the XseA family. Heterooligomer composed of large and small subunits.

The protein resides in the cytoplasm. It catalyses the reaction Exonucleolytic cleavage in either 5'- to 3'- or 3'- to 5'-direction to yield nucleoside 5'-phosphates.. In terms of biological role, bidirectionally degrades single-stranded DNA into large acid-insoluble oligonucleotides, which are then degraded further into small acid-soluble oligonucleotides. The sequence is that of Exodeoxyribonuclease 7 large subunit from Shewanella baltica (strain OS223).